The chain runs to 310 residues: Cytochrome f (310 aa).

An N-terminal signal peptide occupies residues 1-23; it reads MRRLIPILLGSLVLSLSILVAPA. Residues Y28, C48, C51, and H52 each coordinate heme. A helical transmembrane segment spans residues 277–297; the sequence is IYGLLAFFVAVSLAQILLVLK.

Belongs to the cytochrome f family. As to quaternary structure, the 4 large subunits of the cytochrome b6-f complex are cytochrome b6, subunit IV (17 kDa polypeptide, PetD), cytochrome f and the Rieske protein, while the 4 small subunits are PetG, PetL, PetM and PetN. The complex functions as a dimer. The cofactor is heme.

It localises to the cellular thylakoid membrane. Functionally, component of the cytochrome b6-f complex, which mediates electron transfer between photosystem II (PSII) and photosystem I (PSI), cyclic electron flow around PSI, and state transitions. This Prochlorococcus marinus (strain MIT 9313) protein is Cytochrome f.